Reading from the N-terminus, the 378-residue chain is L-asparaginase-like protein GF11609 (378 aa).

A signal peptide spans 1 to 21; it reads MCSPLPLLILRLLLLTHPSLG. 3 disulfide bridges follow: cysteine 71–cysteine 76, cysteine 170–cysteine 186, and cysteine 325–cysteine 352.

Belongs to the Ntn-hydrolase family.

This chain is L-asparaginase-like protein GF11609, found in Drosophila ananassae (Fruit fly).